The sequence spans 493 residues: MNKQASQPRAIYYVVALQIWEYFSFYGMRALLILYLTNQLKYDDNHAYELFSAYCSLVYVTPILGGYLADKVLGNRMAVMLGAFLMAIGHLVLGASEIAPTFLYLSLAIIVCGYGLFKSNISCLLGELYQPEDPRRDGGFSLLYAAGNIGSIVAPIACGYVQEEYSWAMGFALAAIGMLAGLVIFLCGNRHFTHTTGVNKAVLCARSYLLPNWGWLLILLVAAPLLITVLFWKEWSVYALIVATAISLVVLAKIYRQAQTAKQRKELGLIVTLTLFSMLFWAFAQQGGSSISLYIDRFVNRDILGYSVPTAMFQSVNAFAVMLCGVVLAWLVKESVSGNRTVRIWGKFALGLGLMSAGFCILTLSARWSAAYGHSSMPLMVLGLAVMGFAELFIDPVAMSQITRIDIPGVTGVLTGIYMLLSGAIANYLAGVIADQTSQSAFDASGAVNYAINAYVDVFEQITWGALACVGVVLLIWLYQSFKFKSRALAVES.

A run of 13 helical transmembrane segments spans residues 14-34 (VVAL…LLIL), 49-69 (ELFS…GYLA), 91-111 (LVLG…AIIV), 138-158 (GGFS…PIAC), 167-187 (WAMG…IFLC), 212-232 (NWGW…VLFW), 235-255 (WSVY…AKIY), 267-287 (LGLI…AQQG), 312-332 (MFQS…AWLV), 344-364 (IWGK…ILTL), 379-399 (LMVL…PVAM), 413-433 (VLTG…AGVI), and 458-478 (VFEQ…LIWL).

This sequence belongs to the major facilitator superfamily. Proton-dependent oligopeptide transporter (POT/PTR) (TC 2.A.17) family. DtpD subfamily.

Its subcellular location is the cell inner membrane. Probable proton-dependent permease that transports dipeptides. In Salmonella choleraesuis (strain SC-B67), this protein is Dipeptide permease D.